Consider the following 120-residue polypeptide: Cytochrome b5 (120 aa).

The region spanning 2-78 (PKVYSYQEVA…LKGLYIGDVD (77 aa)) is the Cytochrome b5 heme-binding domain. Heme is bound by residues H37 and H61. Residues 98–118 (GSGTLVVILAILMLGVAYYLL) traverse the membrane as a helical segment.

This sequence belongs to the cytochrome b5 family.

The protein localises to the endoplasmic reticulum membrane. Its subcellular location is the microsome membrane. Its function is as follows. Membrane bound hemoprotein which function as an electron carrier for several membrane bound oxygenases. It plays a role in fatty-acid desaturation and is also involved in several steps of the sterol biosynthesis pathway, particularly in the 4-demethylation of the 4,4'-dimethyl zymosterol. This is Cytochrome b5 (CYB5) from Saccharomyces cerevisiae (strain ATCC 204508 / S288c) (Baker's yeast).